Reading from the N-terminus, the 385-residue chain is UPF0496 protein At3g28290 (385 aa).

Residues 138–214 (KDKENDVGKK…IEMEISSRKK (77 aa)) are a coiled coil. 2 helical membrane passes run 217 to 237 (IISN…SMVL) and 242 to 262 (VGAG…IGWV). Residues 267-294 (ILENKIQAREKQEEALKKAHRIANEMDK) adopt a coiled-coil conformation.

Belongs to the UPF0496 family. In terms of tissue distribution, widely expressed.

Its subcellular location is the membrane. This is UPF0496 protein At3g28290 from Arabidopsis thaliana (Mouse-ear cress).